The following is a 148-amino-acid chain: UPF0260 protein PC1_1943 (148 aa).

Belongs to the UPF0260 family.

The sequence is that of UPF0260 protein PC1_1943 from Pectobacterium carotovorum subsp. carotovorum (strain PC1).